A 449-amino-acid chain; its full sequence is Xylose isomerase (449 aa).

Residues H103 and D106 contribute to the active site. The Mg(2+) site is built by E234, E270, H273, D298, D309, D311, and D342.

It belongs to the xylose isomerase family. Homotetramer. Requires Mg(2+) as cofactor.

The protein resides in the cytoplasm. It catalyses the reaction alpha-D-xylose = alpha-D-xylulofuranose. Involved in D-xylose catabolism. In Lactiplantibacillus pentosus (Lactobacillus pentosus), this protein is Xylose isomerase (xylA).